The following is a 306-amino-acid chain: Glutathione transport system permease protein GsiC (306 aa).

Over 1–8 the chain is Cytoplasmic; the sequence is MLNYVLKR. A helical transmembrane segment spans residues 9–29; it reads LLGLIPTLLIVAVLVFLFVHL. The Periplasmic segment spans residues 30-102; that stretch reads LPGDPARLIA…SRFLPTLWLT (73 aa). Positions 95-292 constitute an ABC transmembrane type-1 domain; that stretch reads FLPTLWLTIT…LEFILINLVV (198 aa). Residues 103 to 123 form a helical membrane-spanning segment; that stretch reads ITSMIWAVLFGMAIGIAAAVW. Residues 124 to 134 are Cytoplasmic-facing; the sequence is RNRWPDRLGMT. A helical transmembrane segment spans residues 135-155; it reads LAVTGISFPAFALGMLLMQIF. Residues 156–168 are Periplasmic-facing; that stretch reads SVDLGWLPTVGAD. The chain crosses the membrane as a helical span at residues 169–189; the sequence is SWQHYILPSLTLGAAVASVMA. The Cytoplasmic segment spans residues 190 to 228; the sequence is RFTRSSFVDVLSEDYMRTARAKGVSETWVVLKHGLRNAM. The helical transmembrane segment at 229–249 threads the bilayer; the sequence is IPVVTMMGLQFGFLLGGSIVV. Topologically, residues 250–278 are periplasmic; the sequence is EKVFNWPGLGRLLVDSVDMRDYPVIQAEV. Residues 279–299 traverse the membrane as a helical segment; sequence LLFSLEFILINLVVDVLYAAI. Over 300–306 the chain is Cytoplasmic; sequence NPAIRYK.

It belongs to the binding-protein-dependent transport system permease family. In terms of assembly, the complex is composed of two ATP-binding proteins (GsiA), two transmembrane proteins (GsiC and GsiD) and a solute-binding protein (GsiB).

It is found in the cell inner membrane. Its function is as follows. Part of the ABC transporter complex GsiABCD involved in glutathione import. Probably responsible for the translocation of the substrate across the membrane. This is Glutathione transport system permease protein GsiC from Salmonella paratyphi A (strain ATCC 9150 / SARB42).